The primary structure comprises 2059 residues: Desmoplakin-A (2059 aa).

The segment covering 1–11 (MSLSGSQTRLH) has biased composition (polar residues). The interval 1–25 (MSLSGSQTRLHQISRRSSSRPDLTA) is disordered. 2 coiled-coil regions span residues 320-354 (IPQK…LLKN) and 397-453 (FKEA…VQTL). A disordered region spans residues 665–690 (EVSSGKTATGVSSGKTATGVSSGKTS). Residues 671 to 690 (TATGVSSGKTATGVSSGKTS) show a composition bias toward low complexity. 2 coiled-coil regions span residues 1062–1229 (MEEL…AELE) and 1261–1383 (LQQD…LQQR). Plectin repeat units follow at residues 1450 to 1488 (YLGG…TLEL), 1489 to 1526 (LEAQ…KDKL), 1564 to 1602 (LLEA…NEIL), 1666 to 1694 (IVDP…FLEL), 1847 to 1885 (LLEA…SVKL), and 1923 to 1961 (FLEF…AQKL). The interval 2008 to 2059 (KGISSPYNVSSGPSSRSGSRAGSRTGSRSGSRRGSVDYSSSSVSYTFFSSAS) is disordered. A compositionally biased stretch (low complexity) spans 2011–2059 (SSPYNVSSGPSSRSGSRAGSRTGSRSGSRRGSVDYSSSSVSYTFFSSAS).

It belongs to the plakin or cytolinker family.

It localises to the cell junction. The protein resides in the desmosome. It is found in the cell membrane. Its function is as follows. Involved in the organization of desmosome cell-cell junctions. Of particular importance in cell adhesion in the skin and during cardiac development. May also play a role in the regulation of Wnt, TGF-beta and Hippo signaling pathways. The chain is Desmoplakin-A from Danio rerio (Zebrafish).